The following is a 282-amino-acid chain: Bifunctional protein FolD (282 aa).

NADP(+) contacts are provided by residues 165-167 (NRS), Ser190, and Ile231.

Belongs to the tetrahydrofolate dehydrogenase/cyclohydrolase family. In terms of assembly, homodimer.

The catalysed reaction is (6R)-5,10-methylene-5,6,7,8-tetrahydrofolate + NADP(+) = (6R)-5,10-methenyltetrahydrofolate + NADPH. It carries out the reaction (6R)-5,10-methenyltetrahydrofolate + H2O = (6R)-10-formyltetrahydrofolate + H(+). It participates in one-carbon metabolism; tetrahydrofolate interconversion. Catalyzes the oxidation of 5,10-methylenetetrahydrofolate to 5,10-methenyltetrahydrofolate and then the hydrolysis of 5,10-methenyltetrahydrofolate to 10-formyltetrahydrofolate. This Clostridium botulinum (strain ATCC 19397 / Type A) protein is Bifunctional protein FolD.